The sequence spans 285 residues: 2-dehydro-3-deoxyphosphooctonate aldolase (285 aa).

It belongs to the KdsA family.

It is found in the cytoplasm. It catalyses the reaction D-arabinose 5-phosphate + phosphoenolpyruvate + H2O = 3-deoxy-alpha-D-manno-2-octulosonate-8-phosphate + phosphate. It participates in carbohydrate biosynthesis; 3-deoxy-D-manno-octulosonate biosynthesis; 3-deoxy-D-manno-octulosonate from D-ribulose 5-phosphate: step 2/3. Its pathway is bacterial outer membrane biogenesis; lipopolysaccharide biosynthesis. This is 2-dehydro-3-deoxyphosphooctonate aldolase from Delftia acidovorans (strain DSM 14801 / SPH-1).